The primary structure comprises 306 residues: Transcription factor MYBS1 (306 aa).

The Myb-like domain maps to 18–73 (WTREDDKAFENALAACAAPPPADGGAPDDDWFAALAASVPGARSAEEVRRHYEALV). Residues 72-86 (LVEDVAAIDAGRVPL) carry the Nuclear export signal 1 motif. The tract at residues 89–142 (YAGEESAAPPDGAGAAAAASKDGGHRRDERKGGGGGYDGGKSCSKAEQERRKGI) is disordered. Residues 92-109 (EESAAPPDGAGAAAAASK) are compositionally biased toward low complexity. Basic and acidic residues-rich tracts occupy residues 110–120 (DGGHRRDERKG) and 132–142 (SKAEQERRKGI). Residues 133 to 140 (KAEQERRK) carry the Nuclear localization signal 1 motif. Residues 136–192 (QERRKGIPWTEEEHRLFLLGLDKFGKGDWRSISRNFVISRTPTQVASHAQKYFIRLN) enclose the HTH myb-type domain. Residues 164–188 (WRSISRNFVISRTPTQVASHAQKYF) constitute a DNA-binding region (H-T-H motif). Residues 196–200 (RDRRR) carry the Nuclear localization signal 2 motif. The short motif at 203–215 (IHDITSVTAGDQV) is the Nuclear export signal 2 element. A compositionally biased stretch (low complexity) spans 228-241 (ATGNPAAAALGPPG). The segment at 228 to 255 (ATGNPAAAALGPPGMKHHHHHHPGGAPP) is disordered.

Homodimer. Interacts with GAMYB. In terms of tissue distribution, expressed in aboveground tissues, with the highest level in leaves.

Its subcellular location is the nucleus. It is found in the cytoplasm. In terms of biological role, transcription activator that binds to 5'-TATCCA-3' elements in gene promoters. Derepresses strongly the sugar-repressed transcription of promoters containing SRS or 5'-TATCCA-3' elements. Functions with GAMYB to integrate diverse nutrient starvation and gibberellin (GA) signaling pathways during germination of grains. Sugar, nitrogen and phosphate starvation signals converge and interconnect with GA to promote the co-nuclear import of MYBS1 and GAMYB, resulting in the expression of a large set of GA-inducible hydrolases, transporters, and regulators that are essential for mobilization of nutrient reserves in the endosperm to support seedling growth. The chain is Transcription factor MYBS1 from Oryza sativa subsp. japonica (Rice).